A 644-amino-acid chain; its full sequence is Chaperone protein HtpG (644 aa).

Positions 1–352 (MNARVEQLEF…AQDMSLNVSR (352 aa)) are a; substrate-binding. The b stretch occupies residues 353-566 (EILQQDRQIK…AFGITPALAR (214 aa)). The segment at 567 to 644 (LYRASGQDIP…ILADRLARTL (78 aa)) is c.

Belongs to the heat shock protein 90 family. Homodimer.

Its subcellular location is the cytoplasm. Molecular chaperone. Has ATPase activity. The chain is Chaperone protein HtpG from Mycobacterium avium (strain 104).